A 42-amino-acid chain; its full sequence is Ostricacin-4 (42 aa).

3 disulfides stabilise this stretch: Cys-8–Cys-36, Cys-15–Cys-30, and Cys-20–Cys-37.

The protein resides in the secreted. Functionally, has antibacterial activity against the Gram-positive bacterium S.aureus 1056 MRSA (MIC=11.48 ug/ml) and the Gram-negative bacterium E.coli O157:H7 (MIC=12.03 ug/ml). Does not have antifungal activity against the yeast C.albicans 3153A. This Struthio camelus (Common ostrich) protein is Ostricacin-4.